The sequence spans 422 residues: Replication factor C large subunit (422 aa).

63-70 (GPPGVGKT) provides a ligand contact to ATP.

Belongs to the activator 1 small subunits family. RfcL subfamily. Heteromultimer composed of small subunits (RfcS) and large subunits (RfcL).

Part of the RFC clamp loader complex which loads the PCNA sliding clamp onto DNA. In Pyrobaculum aerophilum (strain ATCC 51768 / DSM 7523 / JCM 9630 / CIP 104966 / NBRC 100827 / IM2), this protein is Replication factor C large subunit.